We begin with the raw amino-acid sequence, 468 residues long: UDP-N-acetylmuramate--L-alanine ligase (468 aa).

112 to 118 (GTHGKTT) is an ATP binding site.

This sequence belongs to the MurCDEF family.

Its subcellular location is the cytoplasm. It carries out the reaction UDP-N-acetyl-alpha-D-muramate + L-alanine + ATP = UDP-N-acetyl-alpha-D-muramoyl-L-alanine + ADP + phosphate + H(+). It functions in the pathway cell wall biogenesis; peptidoglycan biosynthesis. In terms of biological role, cell wall formation. The chain is UDP-N-acetylmuramate--L-alanine ligase from Bordetella pertussis (strain Tohama I / ATCC BAA-589 / NCTC 13251).